The chain runs to 206 residues: Small ribosomal subunit protein uS4 (206 aa).

Positions 96–156 constitute an S4 RNA-binding domain; the sequence is QRLDNVVYRM…EKSKTQARII (61 aa).

Belongs to the universal ribosomal protein uS4 family. As to quaternary structure, part of the 30S ribosomal subunit. Contacts protein S5. The interaction surface between S4 and S5 is involved in control of translational fidelity.

In terms of biological role, one of the primary rRNA binding proteins, it binds directly to 16S rRNA where it nucleates assembly of the body of the 30S subunit. With S5 and S12 plays an important role in translational accuracy. The protein is Small ribosomal subunit protein uS4 of Pseudoalteromonas translucida (strain TAC 125).